A 261-amino-acid chain; its full sequence is Snake venom serine protease (261 aa).

A signal peptide spans 1-20 (MALIGVLANLLILCLSYART). Residues 21 to 24 (APDR) constitute a propeptide that is removed on maturation. One can recognise a Peptidase S1 domain in the interval 25–249 (IIGGLECNQN…YIDWIQDIMA (225 aa)). 6 disulfide bridges follow: C31–C163, C50–C66, C98–C256, C142–C210, C174–C189, and C200–C225. Catalysis depends on H65, which acts as the Charge relay system. N103 carries N-linked (GlcNAc...) asparagine glycosylation. D110 serves as the catalytic Charge relay system. N117 and N121 each carry an N-linked (GlcNAc...) asparagine glycan. S204 (charge relay system) is an active-site residue.

This sequence belongs to the peptidase S1 family. Snake venom subfamily. As to quaternary structure, monomer. Expressed by the venom gland.

Its subcellular location is the secreted. In terms of biological role, snake venom serine protease that may act in the hemostasis system of the prey. This is Snake venom serine protease from Philodryas olfersii (Green snake).